The chain runs to 70 residues: Turripeptide Lol9.1 (70 aa).

The N-terminal stretch at 1 to 20 (MKVYCLLLVLLVGLVSQAHG) is a signal peptide. Positions 21–70 (KPTKRCLSVCSAEYEPVCGSDGKTYANKCHLMTEACWSPTSITLVHEGKC) constitute a Kazal-like domain. 3 cysteine pairs are disulfide-bonded: cysteine 26-cysteine 56, cysteine 30-cysteine 49, and cysteine 38-cysteine 70.

Belongs to the conopeptide P-like superfamily. Expressed by the venom duct.

It is found in the secreted. Acts as a neurotoxin by inhibiting an ion channel. May also act as a serine protease inhibitor, since it possess the kazal serine protease inhibitor signature. The chain is Turripeptide Lol9.1 from Iotyrris olangoensis (Sea snail).